The following is a 433-amino-acid chain: 3-phosphoshikimate 1-carboxyvinyltransferase (433 aa).

3-phosphoshikimate contacts are provided by lysine 22, serine 23, and arginine 27. Position 22 (lysine 22) interacts with phosphoenolpyruvate. Phosphoenolpyruvate-binding residues include glycine 95 and arginine 123. Residues serine 167, glutamine 169, aspartate 315, and lysine 342 each contribute to the 3-phosphoshikimate site. Glutamine 169 is a phosphoenolpyruvate binding site. The Proton acceptor role is filled by aspartate 315. 2 residues coordinate phosphoenolpyruvate: arginine 346 and arginine 387.

It belongs to the EPSP synthase family. As to quaternary structure, monomer.

Its subcellular location is the cytoplasm. It carries out the reaction 3-phosphoshikimate + phosphoenolpyruvate = 5-O-(1-carboxyvinyl)-3-phosphoshikimate + phosphate. Its pathway is metabolic intermediate biosynthesis; chorismate biosynthesis; chorismate from D-erythrose 4-phosphate and phosphoenolpyruvate: step 6/7. In terms of biological role, catalyzes the transfer of the enolpyruvyl moiety of phosphoenolpyruvate (PEP) to the 5-hydroxyl of shikimate-3-phosphate (S3P) to produce enolpyruvyl shikimate-3-phosphate and inorganic phosphate. The polypeptide is 3-phosphoshikimate 1-carboxyvinyltransferase (Legionella pneumophila (strain Corby)).